Reading from the N-terminus, the 466-residue chain is Asparagine--tRNA ligase (466 aa).

It belongs to the class-II aminoacyl-tRNA synthetase family. As to quaternary structure, homodimer.

Its subcellular location is the cytoplasm. The enzyme catalyses tRNA(Asn) + L-asparagine + ATP = L-asparaginyl-tRNA(Asn) + AMP + diphosphate + H(+). The sequence is that of Asparagine--tRNA ligase from Shewanella putrefaciens (strain CN-32 / ATCC BAA-453).